The following is a 207-amino-acid chain: Partner of Y14 and mago (207 aa).

2 disordered regions span residues 1–28 and 52–133; these read MSTYLQSSEGKFIPATKRPDGTWRKARR and QRQA…NSIS. Residues 64-91 adopt a coiled-coil conformation; that stretch reads LLAAESKKEREKQERTRAKKQEKESGRQ. Positions 68 to 90 are enriched in basic and acidic residues; sequence ESKKEREKQERTRAKKQEKESGR. A compositionally biased stretch (polar residues) spans 123–133; sequence PSGSRDINSIS. Residues 152–184 adopt a coiled-coil conformation; the sequence is AKQLKKLRKKIREIEQIESRIQAGEQKKLDKDQ.

The protein belongs to the pym family. In terms of assembly, interacts (via N-terminus) with mago and tsu/RBM8A; the interaction is direct. As to expression, expression detected in the ovary. In the oocyte expressed in the germarium, nurse cell and follicle cell.

The protein localises to the cytoplasm. Its subcellular location is the nucleus. Functionally, regulator of the exon junction complex (EJC), a multiprotein complex that associates immediately upstream of the exon-exon junction on mRNAs and serves as a positional landmark for the intron exon structure of genes and directs post-transcriptional processes in the cytoplasm such as mRNA export, nonsense-mediated mRNA decay (NMD) or translation. Acts as an EJC disassembly factor by disrupting mature EJC from spliced mRNAs. Required for normal localization of osk mRNA to the posterior pole of the developing oocyte. Does not interact with the small ribosomal unit or components of the translation initiation complex. May not function in cap-dependent translation regulation. This is Partner of Y14 and mago from Drosophila melanogaster (Fruit fly).